The primary structure comprises 392 residues: Phosphoglycerate kinase (392 aa).

Substrate is bound by residues 21 to 23 (DMN), arginine 36, 59 to 62 (HLGR), arginine 114, and arginine 147. Residues lysine 198, glutamate 320, and 346–349 (GGDT) each bind ATP.

It belongs to the phosphoglycerate kinase family. Monomer.

It localises to the cytoplasm. The enzyme catalyses (2R)-3-phosphoglycerate + ATP = (2R)-3-phospho-glyceroyl phosphate + ADP. Its pathway is carbohydrate degradation; glycolysis; pyruvate from D-glyceraldehyde 3-phosphate: step 2/5. This Neisseria meningitidis serogroup B (strain ATCC BAA-335 / MC58) protein is Phosphoglycerate kinase (pgk).